The primary structure comprises 164 residues: Phosphopantetheine adenylyltransferase (164 aa).

This sequence belongs to the eukaryotic CoaD family.

The protein resides in the cytoplasm. It carries out the reaction (R)-4'-phosphopantetheine + ATP + H(+) = 3'-dephospho-CoA + diphosphate. Its pathway is cofactor biosynthesis; coenzyme A biosynthesis. In terms of biological role, reversibly transfers an adenylyl group from ATP to 4'-phosphopantetheine, yielding dephospho-CoA (dPCoA) and pyrophosphate. The sequence is that of Phosphopantetheine adenylyltransferase from Methanothermobacter thermautotrophicus (strain ATCC 29096 / DSM 1053 / JCM 10044 / NBRC 100330 / Delta H) (Methanobacterium thermoautotrophicum).